Consider the following 455-residue polypeptide: Retinoic acid receptor beta (455 aa).

The segment at 1-87 (MTTSSRTCPV…PLPPPRVYKP (87 aa)) is modulating. Residues 44–78 (LQSHPPTSGCSTPSPATVETQSTSSEELVPSPPSP) are disordered. A compositionally biased stretch (polar residues) spans 47 to 66 (HPPTSGCSTPSPATVETQST). NR C4-type zinc fingers lie at residues 88–108 (CFVC…CEGC) and 124–148 (CHRD…LQKC). Residues 88–153 (CFVCQDKSSG…RLQKCFEVGM (66 aa)) constitute a DNA-binding region (nuclear receptor). Positions 154–182 (SKESVRNDRNKKKKEPTKQESTENYEMTA) are hinge. Positions 183–417 (ELDDLTEKIR…PLIQEMLENS (235 aa)) constitute an NR LBD domain. Residues 416-455 (NSEGHEPLTPTSNGNTAEHSPSISPSSVDNSSVSQSPMVQ) are disordered. Residues 424–434 (TPTSNGNTAEH) show a composition bias toward polar residues. The segment covering 435-455 (SPSISPSSVDNSSVSQSPMVQ) has biased composition (low complexity).

Belongs to the nuclear hormone receptor family. NR1 subfamily. In terms of assembly, heterodimer; with a RXR molecule. Binds DNA preferentially as a RAR/RXR heterodimer.

Its subcellular location is the nucleus. Receptor for retinoic acid. Retinoic acid receptors bind as heterodimers to their target response elements in response to their ligands, all-trans or 9-cis retinoic acid, and regulate gene expression in various biological processes. The RAR/RXR heterodimers bind to the retinoic acid response elements (RARE) composed of tandem 5'-AGGTCA-3' sites known as DR1-DR5. Required for limb and craniofacial development. This chain is Retinoic acid receptor beta (RARB), found in Gallus gallus (Chicken).